The chain runs to 330 residues: Ferredoxin--NADP reductase (330 aa).

FAD contacts are provided by Glu-35, Gln-43, Tyr-48, Val-90, Phe-123, Asp-285, and Thr-326.

It belongs to the ferredoxin--NADP reductase type 2 family. In terms of assembly, homodimer. FAD serves as cofactor.

It carries out the reaction 2 reduced [2Fe-2S]-[ferredoxin] + NADP(+) + H(+) = 2 oxidized [2Fe-2S]-[ferredoxin] + NADPH. In Streptococcus equi subsp. zooepidemicus (strain MGCS10565), this protein is Ferredoxin--NADP reductase.